Reading from the N-terminus, the 260-residue chain is Serine hydroxymethyltransferase (260 aa).

Lysine 60 is subject to N6-(pyridoxal phosphate)lysine.

Belongs to the SHMT family. Homodimer. It depends on pyridoxal 5'-phosphate as a cofactor.

The protein localises to the cytoplasm. The catalysed reaction is (6R)-5,10-methylene-5,6,7,8-tetrahydrofolate + glycine + H2O = (6S)-5,6,7,8-tetrahydrofolate + L-serine. Its pathway is one-carbon metabolism; tetrahydrofolate interconversion. The protein operates within amino-acid biosynthesis; glycine biosynthesis; glycine from L-serine: step 1/1. Its function is as follows. Catalyzes the reversible interconversion of serine and glycine with tetrahydrofolate (THF) serving as the one-carbon carrier. This reaction serves as the major source of one-carbon groups required for the biosynthesis of purines, thymidylate, methionine, and other important biomolecules. Also exhibits THF-independent aldolase activity toward beta-hydroxyamino acids, producing glycine and aldehydes, via a retro-aldol mechanism. The polypeptide is Serine hydroxymethyltransferase (Corynebacterium sp. (strain P-1)).